The primary structure comprises 248 residues: Clathrin light chain A (248 aa).

A disordered region spans residues 1–93; that stretch reads MAELDPFGAP…YQESNGPTDS (93 aa). Residues 13–25 are compositionally biased toward gly residues; it reads APGGPALGNGVAG. An involved in binding clathrin heavy chain region spans residues 100–162; sequence VDRLQSEPES…QLQKTKASNR (63 aa). Residues serine 105 and serine 206 each carry the phosphoserine modification. Lysine 223 is modified (N6-acetyllysine). Serine 236 carries the phosphoserine modification. Lysine 242 carries the post-translational modification N6-acetyllysine.

Belongs to the clathrin light chain family. As to quaternary structure, clathrin coats are formed from molecules containing 3 heavy chains and 3 light chains. Interacts with CALY; the interaction stimulates clathrin self-assembly and clathrin-mediated endocytosis. Interacts with CKAP5 and TACC3 forming the TACC3/ch-TOG/clathrin complex located at spindle inter-microtubules bridges; the complex implicates clathrin triskelions.

It localises to the cytoplasmic vesicle membrane. It is found in the membrane. The protein localises to the coated pit. The protein resides in the cytoplasm. Its subcellular location is the cytoskeleton. It localises to the spindle. Its function is as follows. Clathrin is the major protein of the polyhedral coat of coated pits and vesicles. Acts as a component of the TACC3/ch-TOG/clathrin complex proposed to contribute to stabilization of kinetochore fibers of the mitotic spindle by acting as inter-microtubule bridge. This is Clathrin light chain A (Clta) from Rattus norvegicus (Rat).